Here is a 105-residue protein sequence, read N- to C-terminus: Malonate decarboxylase acyl carrier protein (105 aa).

O-(phosphoribosyl dephospho-coenzyme A)serine is present on serine 28.

The protein belongs to the MdcC family. In terms of processing, covalently binds the prosthetic group of malonate decarboxylase.

Its subcellular location is the cytoplasm. Functionally, subunit of malonate decarboxylase, it is an acyl carrier protein to which acetyl and malonyl thioester residues are bound via a 2'-(5''-phosphoribosyl)-3'-dephospho-CoA prosthetic group and turn over during the catalytic mechanism. In Bradyrhizobium diazoefficiens (strain JCM 10833 / BCRC 13528 / IAM 13628 / NBRC 14792 / USDA 110), this protein is Malonate decarboxylase acyl carrier protein.